A 507-amino-acid chain; its full sequence is ATP synthase subunit alpha 2 (507 aa).

Residue 171 to 178 (GDRATGKT) coordinates ATP.

It belongs to the ATPase alpha/beta chains family. F-type ATPases have 2 components, CF(1) - the catalytic core - and CF(0) - the membrane proton channel. CF(1) has five subunits: alpha(3), beta(3), gamma(1), delta(1), epsilon(1). CF(0) has three main subunits: a(1), b(2) and c(9-12). The alpha and beta chains form an alternating ring which encloses part of the gamma chain. CF(1) is attached to CF(0) by a central stalk formed by the gamma and epsilon chains, while a peripheral stalk is formed by the delta and b chains.

The protein resides in the cell inner membrane. The catalysed reaction is ATP + H2O + 4 H(+)(in) = ADP + phosphate + 5 H(+)(out). Produces ATP from ADP in the presence of a proton gradient across the membrane. The alpha chain is a regulatory subunit. This chain is ATP synthase subunit alpha 2, found in Gluconobacter oxydans (strain 621H) (Gluconobacter suboxydans).